The following is a 308-amino-acid chain: MDWNGRDVISIRDFSKSDIEFVLKVAERLEEELREKGSLEYARGKILATLFFEPSTRTRLSFESAMHRLGGSVIGFSSASSTSVRKGESLADTIRTVEQYSDVIVIRHPMEGAARLAAEVAEVPVINAGDGSNQHPTQTLLDLYTIKRAFGKIDGLTIGLLGDLKYGRTVHSLAEALAFYDVELYLISPELLRMPKHIVEELRERGVKIHETTDLEGAIPELDVLYVTRIQRERFPDEEEYLKVKGSYQVNCKLLKNAKETLKVMHPLPRVDEIHPEVDKSEHALYFRQVFSGVPVRMALLGLTLGVL.

The carbamoyl phosphate site is built by Arg-57 and Thr-58. Lys-86 is a binding site for L-aspartate. Residues Arg-107, His-135, and Gln-138 each coordinate carbamoyl phosphate. Positions 168 and 229 each coordinate L-aspartate. Residues Leu-268 and Pro-269 each contribute to the carbamoyl phosphate site.

This sequence belongs to the aspartate/ornithine carbamoyltransferase superfamily. ATCase family. In terms of assembly, heterooligomer of catalytic and regulatory chains.

It carries out the reaction carbamoyl phosphate + L-aspartate = N-carbamoyl-L-aspartate + phosphate + H(+). The protein operates within pyrimidine metabolism; UMP biosynthesis via de novo pathway; (S)-dihydroorotate from bicarbonate: step 2/3. Catalyzes the condensation of carbamoyl phosphate and aspartate to form carbamoyl aspartate and inorganic phosphate, the committed step in the de novo pyrimidine nucleotide biosynthesis pathway. The protein is Aspartate carbamoyltransferase catalytic subunit of Thermococcus gammatolerans (strain DSM 15229 / JCM 11827 / EJ3).